A 258-amino-acid polypeptide reads, in one-letter code: Mitochondrial distribution and morphology protein 12 (258 aa).

Residues 1–233 (MSFDIHWSNL…WPSWIELDFN (233 aa)) form the SMP-LTD domain. The segment at 238 to 258 (EDLQQSKDTPTTANTGTTTTN) is disordered. A compositionally biased stretch (low complexity) spans 246–258 (TPTTANTGTTTTN).

This sequence belongs to the MDM12 family. Component of the ER-mitochondria encounter structure (ERMES) or MDM complex, composed of MMM1, MDM10, MDM12 and MDM34. An MMM1 homodimer associates with one molecule of MDM12 on each side in a pairwise head-to-tail manner, and the SMP-LTD domains of MMM1 and MDM12 generate a continuous hydrophobic tunnel for phospholipid trafficking.

Its subcellular location is the mitochondrion outer membrane. The protein resides in the endoplasmic reticulum membrane. Functionally, component of the ERMES/MDM complex, which serves as a molecular tether to connect the endoplasmic reticulum (ER) and mitochondria. Components of this complex are involved in the control of mitochondrial shape and protein biogenesis, and function in nonvesicular lipid trafficking between the ER and mitochondria. MDM12 is required for the interaction of the ER-resident membrane protein MMM1 and the outer mitochondrial membrane-resident beta-barrel protein MDM10. The MDM12-MMM1 subcomplex functions in the major beta-barrel assembly pathway that is responsible for biogenesis of all mitochondrial outer membrane beta-barrel proteins, and acts in a late step after the SAM complex. The MDM10-MDM12-MMM1 subcomplex further acts in the TOM40-specific pathway after the action of the MDM12-MMM1 complex. Essential for establishing and maintaining the structure of mitochondria and maintenance of mtDNA nucleoids. The sequence is that of Mitochondrial distribution and morphology protein 12 from Zygosaccharomyces rouxii (strain ATCC 2623 / CBS 732 / NBRC 1130 / NCYC 568 / NRRL Y-229).